The primary structure comprises 142 residues: Large ribosomal subunit protein uL13 (142 aa).

The protein belongs to the universal ribosomal protein uL13 family. As to quaternary structure, part of the 50S ribosomal subunit.

In terms of biological role, this protein is one of the early assembly proteins of the 50S ribosomal subunit, although it is not seen to bind rRNA by itself. It is important during the early stages of 50S assembly. This chain is Large ribosomal subunit protein uL13, found in Pyrococcus furiosus (strain ATCC 43587 / DSM 3638 / JCM 8422 / Vc1).